The sequence spans 78 residues: Small ribosomal subunit protein bS18 (78 aa).

Belongs to the bacterial ribosomal protein bS18 family. In terms of assembly, part of the 30S ribosomal subunit. Forms a tight heterodimer with protein bS6.

In terms of biological role, binds as a heterodimer with protein bS6 to the central domain of the 16S rRNA, where it helps stabilize the platform of the 30S subunit. The sequence is that of Small ribosomal subunit protein bS18 from Limosilactobacillus reuteri (strain DSM 20016) (Lactobacillus reuteri).